A 443-amino-acid polypeptide reads, in one-letter code: 26S proteasome regulatory subunit 4 homolog B (443 aa).

Disordered regions lie at residues 1–55 (MGQG…LPTV) and 87–108 (RLKP…LRGT). 2 stretches are compositionally biased toward basic and acidic residues: residues 12–28 (QGDR…KKFE) and 87–106 (RLKP…DDLR). An ATP-binding site is contributed by 229–236 (GEPGTGKT). Residues lysine 296 and lysine 433 each participate in a glycyl lysine isopeptide (Lys-Gly) (interchain with G-Cter in ubiquitin) cross-link.

It belongs to the AAA ATPase family. As to quaternary structure, component of the 19S regulatory particle (RP/PA700) base subcomplex of the 26S proteasome. The 26S proteasome is composed of a core protease (CP), known as the 20S proteasome, capped at one or both ends by the 19S regulatory particle (RP/PA700). The RP/PA700 complex is composed of at least 17 different subunits in two subcomplexes, the base and the lid, which form the portions proximal and distal to the 20S proteolytic core, respectively. In terms of tissue distribution, preferentially expressed in the root and shoot apical meristem.

Its subcellular location is the cytoplasm. The protein localises to the nucleus. Functionally, the 26S protease is involved in the ATP-dependent degradation of ubiquitinated proteins. The regulatory (or ATPase) complex confers ATP dependency and substrate specificity to the 26S complex. Acts redundantly with RPT2A in the regulation of gametogenesis. With RPT2A plays a critical role in 26S proteasome assembly. The chain is 26S proteasome regulatory subunit 4 homolog B from Arabidopsis thaliana (Mouse-ear cress).